The following is a 674-amino-acid chain: Fidgetin-like protein 1 (674 aa).

The disordered stretch occupies residues 157–179; that stretch reads SQESDSLPNSAHDRDRTQDFPES. Residues 167–179 show a composition bias toward basic and acidic residues; that stretch reads AHDRDRTQDFPES. Residue K225 forms a Glycyl lysine isopeptide (Lys-Gly) (interchain with G-Cter in SUMO2) linkage. Residue S259 is modified to Phosphoserine. Residues 295–344 are necessary and sufficient for interaction with RAD51; the sequence is FKTAKEQLWVDQQKKYHQPQRASGSSYGGVKKSLGASRSRGILGKFVPPI. K339 bears the N6-acetyllysine mark. ATP is bound by residues A404 and 444–449; that span reads GTGKTL.

The protein belongs to the AAA ATPase family. Hexamer. Interacts (via N-terminal one-half region) with RAD51; the interaction is direct. Interacts (via N-terminal one-half region) with SPIDR (via the C-terminal region); the interaction is direct. Interacts with FIRRM; may regulate homologous recombination. It depends on Mg(2+) as a cofactor.

It is found in the nucleus. Its subcellular location is the cytoplasm. The protein localises to the perinuclear region. The enzyme catalyses ATP + H2O = ADP + phosphate + H(+). Functionally, involved in DNA double-strand break (DBS) repair via homologous recombination (HR). Recruited at DSB sites independently of BRCA2, RAD51 and RAD51 paralogs in a H2AX-dependent manner. May regulate osteoblast proliferation and differentiation. May play a role in the control of male meiosis dynamic. The polypeptide is Fidgetin-like protein 1 (FIGNL1) (Homo sapiens (Human)).